We begin with the raw amino-acid sequence, 120 residues long: NAD(P)H-quinone oxidoreductase subunit 3, chloroplastic (120 aa).

Helical transmembrane passes span 9–29 (IFWAFLIISIFIPILAFTISG), 64–84 (MFALVFVVFDVETVFLYPWAM), and 88–108 (VLGISVFIEALIFVLILIVGS).

It belongs to the complex I subunit 3 family. In terms of assembly, NDH is composed of at least 16 different subunits, 5 of which are encoded in the nucleus.

The protein resides in the plastid. The protein localises to the chloroplast thylakoid membrane. The catalysed reaction is a plastoquinone + NADH + (n+1) H(+)(in) = a plastoquinol + NAD(+) + n H(+)(out). It catalyses the reaction a plastoquinone + NADPH + (n+1) H(+)(in) = a plastoquinol + NADP(+) + n H(+)(out). Functionally, NDH shuttles electrons from NAD(P)H:plastoquinone, via FMN and iron-sulfur (Fe-S) centers, to quinones in the photosynthetic chain and possibly in a chloroplast respiratory chain. The immediate electron acceptor for the enzyme in this species is believed to be plastoquinone. Couples the redox reaction to proton translocation, and thus conserves the redox energy in a proton gradient. The protein is NAD(P)H-quinone oxidoreductase subunit 3, chloroplastic of Lotus japonicus (Lotus corniculatus var. japonicus).